The following is a 737-amino-acid chain: MEGEAVEAIVEESETFIKGKERKTYQRRREGGQEEDACHLPQNQTDGGEVVQDVNSSVQMVMMEQLDPTLLQMKTEVMEGTVAPEAEAAVDDTQIITLQVVNMEEQPINIGELQLVQVPVPVTVPVATTSVEELQGAYENEVSKEGLAESEPMICHTLPLPEGFQVVKVGANGEVETLEQGELPPQEDPSWQKDPDYQPPAKKTKKTKKSKLRYTEEGKDVDVSVYDFEEEQQEGLLSEVNAEKVVGNMKPPKPTKIKKKGVKKTFQCELCSYTCPRRSNLDRHMKSHTDERPHKCHLCGRAFRTVTLLRNHLNTHTGTRPHKCPDCDMAFVTSGELVRHRRYKHTHEKPFKCSMCDYASVEVSKLKRHIRSHTGERPFQCSLCSYASRDTYKLKRHMRTHSGEKPYECYICHARFTQSGTMKMHILQKHTENVAKFHCPHCDTVIARKSDLGVHLRKQHSYIEQGKKCRYCDAVFHERYALIQHQKSHKNEKRFKCDQCDYACRQERHMIMHKRTHTGEKPYACSHCDKTFRQKQLLDMHFKRYHDPNFVPAAFVCSKCGKTFTRRNTMARHADNCAGPDGVEGENGGETKKSKRGRKRKMRSKKEDSSDSENAEPDLDDNEEEEEPAVEIEPEPEPQPQPQPQPQPQPVAPAPPPAKKRRGRPPGRTNQPKQNQPTAIIQVEDQNTGAIENIIVEVKKEPDAEPAEGEEEEAQAAPADAPNGDLTPEMILSMMDR.

Met1 is subject to N-acetylmethionine. Lys18 participates in a covalent cross-link: Glycyl lysine isopeptide (Lys-Gly) (interchain with G-Cter in SUMO2). Lys74 is covalently cross-linked (Glycyl lysine isopeptide (Lys-Gly) (interchain with G-Cter in SUMO)). Residues 180 to 211 (QGELPPQEDPSWQKDPDYQPPAKKTKKTKKSK) form a disordered region. The span at 202–211 (KKTKKTKKSK) shows a compositional bias: basic residues. Lys219 is covalently cross-linked (Glycyl lysine isopeptide (Lys-Gly) (interchain with G-Cter in SUMO2)). The segment at 266-288 (FQCELCSYTCPRRSNLDRHMKSH) adopts a C2H2-type 1 zinc-finger fold. Phosphothreonine is present on Thr289. The C2H2-type 2 zinc-finger motif lies at 294–316 (HKCHLCGRAFRTVTLLRNHLNTH). Thr317 carries the phosphothreonine modification. 2 consecutive C2H2-type zinc fingers follow at residues 322 to 345 (HKCP…RYKH) and 351 to 373 (FKCS…IRSH). At Thr374 the chain carries Phosphothreonine. Residues 379–401 (FQCSLCSYASRDTYKLKRHMRTH) form a C2H2-type 5 zinc finger. Residue Ser402 is modified to Phosphoserine. 5 C2H2-type zinc fingers span residues 407–430 (YECY…LQKH), 437–460 (FHCP…RKQH), 467–489 (KKCR…QKSH), 495–517 (FKCD…KRTH), and 523–546 (YACS…KRYH). The C2H2-type 11; atypical zinc-finger motif lies at 555–577 (FVCSKCGKTFTRRNTMARHADNC). 2 disordered regions span residues 573–687 (HADN…EDQN) and 699–727 (KKEP…GDLT). Residues 593 to 604 (KSKRGRKRKMRS) are compositionally biased toward basic residues. Ser609, Ser610, and Ser612 each carry phosphoserine. Residues 610 to 636 (SDSENAEPDLDDNEEEEEPAVEIEPEP) are compositionally biased toward acidic residues. A compositionally biased stretch (pro residues) spans 637 to 657 (EPQPQPQPQPQPQPVAPAPPP). Residues 668 to 687 (RTNQPKQNQPTAIIQVEDQN) show a composition bias toward polar residues. Lys699 participates in a covalent cross-link: Glycyl lysine isopeptide (Lys-Gly) (interchain with G-Cter in SUMO); alternate. A Glycyl lysine isopeptide (Lys-Gly) (interchain with G-Cter in SUMO2); alternate cross-link involves residue Lys699. The segment covering 704 to 714 (AEPAEGEEEEA) has biased composition (acidic residues).

It belongs to the CTCF zinc-finger protein family. Interacts with CHD8. Interacts with LLPH. Interacts with CENPE. Interacts with BRD2; promoting BRD2 recruitment to chromatin. In terms of processing, sumoylated on Lys-74 and Lys-699; sumoylation of CTCF contributes to the repressive function of CTCF on the MYC P2 promoter.

It is found in the nucleus. It localises to the nucleoplasm. The protein localises to the chromosome. The protein resides in the centromere. Chromatin binding factor that binds to DNA sequence specific sites and regulates the 3D structure of chromatin. Binds together strands of DNA, thus forming chromatin loops, and anchors DNA to cellular structures, such as the nuclear lamina. Defines the boundaries between active and heterochromatic DNA via binding to chromatin insulators, thereby preventing interaction between promoter and nearby enhancers and silencers. Plays a critical role in the epigenetic regulation. Participates in the allele-specific gene expression at the imprinted IGF2/H19 gene locus. On the maternal allele, binding within the H19 imprinting control region (ICR) mediates maternally inherited higher-order chromatin conformation to restrict enhancer access to IGF2. Mediates interchromosomal association between IGF2/H19 and WSB1/NF1 and may direct distant DNA segments to a common transcription factory. Regulates asynchronous replication of IGF2/H19. Plays a critical role in gene silencing over considerable distances in the genome. Preferentially interacts with unmethylated DNA, preventing spreading of CpG methylation and maintaining methylation-free zones. Inversely, binding to target sites is prevented by CpG methylation. Plays an important role in chromatin remodeling. Can dimerize when it is bound to different DNA sequences, mediating long-range chromatin looping. Causes local loss of histone acetylation and gain of histone methylation in the beta-globin locus, without affecting transcription. When bound to chromatin, it provides an anchor point for nucleosomes positioning. Seems to be essential for homologous X-chromosome pairing. May participate with Tsix in establishing a regulatable epigenetic switch for X chromosome inactivation. May play a role in preventing the propagation of stable methylation at the escape genes from X-inactivation. Involved in sister chromatid cohesion. Associates with both centromeres and chromosomal arms during metaphase and required for cohesin localization to CTCF sites. Plays a role in the recruitment of CENPE to the pericentromeric/centromeric regions of the chromosome during mitosis. Acts as a transcriptional repressor binding to promoters of vertebrate MYC gene and BAG1 gene. Also binds to the PLK and PIM1 promoters. Acts as a transcriptional activator of APP. Regulates APOA1/C3/A4/A5 gene cluster and controls MHC class II gene expression. Plays an essential role in oocyte and preimplantation embryo development by activating or repressing transcription. Seems to act as tumor suppressor. The sequence is that of Transcriptional repressor CTCF (Ctcf) from Rattus norvegicus (Rat).